An 841-amino-acid chain; its full sequence is Serine/threonine-protein kinase/endoribonuclease IRE1a (841 aa).

The signal sequence occupies residues 1-30 (MPPRCPFLRHLFFLLLLLSPWIMSPCGGAA). Topologically, residues 31 to 323 (DDVTYPIVPS…KQKYTYLFGQ (293 aa)) are lumenal. N-linked (GlcNAc...) asparagine glycans are attached at residues asparagine 100, asparagine 104, asparagine 119, asparagine 132, and asparagine 221. Residues 324–344 (WSPVKLLAPLVLLGVVVSVFI) form a helical membrane-spanning segment. Over 345-841 (KKFSSRGSDV…FRKYFKCDII (497 aa)) the chain is Cytoplasmic. A disordered region spans residues 352 to 382 (SDVSLKAGPSKKKKNRKSAKDTNRQSVPRGQ). Residues 414-704 (FLSSKEIAKG…ATEVLLHPMF (291 aa)) enclose the Protein kinase domain. ATP-binding positions include 420–428 (IAKGSNGTV) and lysine 442. The active-site Proton acceptor is aspartate 570. In terms of domain architecture, KEN spans 707–838 (SEMRLSFLRD…EEVFRKYFKC (132 aa)).

This sequence belongs to the protein kinase superfamily. Ser/Thr protein kinase family. In terms of assembly, homodimer; disulfide-linked. Dimer formation is driven by hydrophobic interactions within the N-terminal luminal domains and stabilized by disulfide bridges. Mg(2+) is required as a cofactor. Autophosphorylated. Ubiquitous. Detected in the vascular bundles of young plants, leaves, roots, seedlings and in the receptacles of flowers and vascular bundles of the petals.

The protein resides in the endoplasmic reticulum membrane. It catalyses the reaction L-seryl-[protein] + ATP = O-phospho-L-seryl-[protein] + ADP + H(+). The enzyme catalyses L-threonyl-[protein] + ATP = O-phospho-L-threonyl-[protein] + ADP + H(+). Its activity is regulated as follows. The kinase domain is activated by trans-autophosphorylation. Kinase activity is required for activation of the endoribonuclease domain. Functionally, senses unfolded proteins in the lumen of the endoplasmic reticulum via its N-terminal domain which leads to enzyme auto-activation. The active endoribonuclease domain splices bZIP60 mRNA to generate a new C-terminus, converting it into a potent unfolded-protein response transcriptional activator which then induces transcription of UPR target genes. Involved in organ growth regulation. Plays a role in plant immunity and abiotic stress responses. In Arabidopsis thaliana (Mouse-ear cress), this protein is Serine/threonine-protein kinase/endoribonuclease IRE1a (IRE1A).